Consider the following 517-residue polypeptide: Sterol 14-alpha demethylase CYP51C (517 aa).

A helical membrane pass occupies residues 10–30; that stretch reads TLPLSVSIPLTTSIIIILSIV. Tyr115 contacts lanosterol. Gly300 contacts itraconazole. A heme-binding site is contributed by Cys458.

The protein belongs to the cytochrome P450 family. It depends on heme as a cofactor.

The protein resides in the endoplasmic reticulum membrane. Its pathway is steroid metabolism; ergosterol biosynthesis. Its function is as follows. Together with cyp51A and cyp51B, encodes the sterol 14alpha-demethylase that plays a critical role in the third module of ergosterol biosynthesis pathway, being ergosterol the major sterol component in fungal membranes that participates in a variety of functions. Cyp51C does not seem to encode an active sterol 14-alpha-demethylase, but can impact indirectly on sterol 14alpha-demethylation, and is required for full virulence on host wheat ears, but not on Arabidopsis floral tissue or the fruits of apple and tomato. The third module or late pathway involves the ergosterol synthesis itself through consecutive reactions that mainly occur in the endoplasmic reticulum (ER) membrane. In filamentous fungi, during the initial step of this module, lanosterol (lanosta-8,24-dien-3beta-ol) can be metabolized to eburicol. Sterol 14alpha-demethylase catalyzes the three-step oxidative removal of the 14alpha-methyl group (C-32) of both these sterols in the form of formate, and converts eburicol and lanosterol to 14-demethyleburicol (4,4,24-trimethylergosta-8,14,24(28)-trienol) and 4,4-dimethyl-5alpha-cholesta-8,14,24-trien-3beta-ol, respectively, which are further metabolized by other enzymes in the pathway to ergosterol. This Gibberella zeae (strain ATCC MYA-4620 / CBS 123657 / FGSC 9075 / NRRL 31084 / PH-1) (Wheat head blight fungus) protein is Sterol 14-alpha demethylase CYP51C.